Reading from the N-terminus, the 444-residue chain is UDP-N-acetylmuramate--L-alanine ligase (444 aa).

ATP is bound at residue 110 to 116 (GAHGKTS).

The protein belongs to the MurCDEF family.

The protein resides in the cytoplasm. It catalyses the reaction UDP-N-acetyl-alpha-D-muramate + L-alanine + ATP = UDP-N-acetyl-alpha-D-muramoyl-L-alanine + ADP + phosphate + H(+). It functions in the pathway cell wall biogenesis; peptidoglycan biosynthesis. In terms of biological role, cell wall formation. This is UDP-N-acetylmuramate--L-alanine ligase from Streptococcus pneumoniae (strain Hungary19A-6).